Here is a 378-residue protein sequence, read N- to C-terminus: Glutamate 5-kinase (378 aa).

Lys19 is an ATP binding site. 3 residues coordinate substrate: Ser59, Asp146, and Asn158. ATP is bound at residue 178 to 179; the sequence is TD. Residues 285–363 enclose the PUA domain; sequence RGSVAVDAGA…SEFERLLGYT (79 aa).

The protein belongs to the glutamate 5-kinase family.

Its subcellular location is the cytoplasm. The enzyme catalyses L-glutamate + ATP = L-glutamyl 5-phosphate + ADP. It participates in amino-acid biosynthesis; L-proline biosynthesis; L-glutamate 5-semialdehyde from L-glutamate: step 1/2. Functionally, catalyzes the transfer of a phosphate group to glutamate to form L-glutamate 5-phosphate. The chain is Glutamate 5-kinase from Polaromonas sp. (strain JS666 / ATCC BAA-500).